Consider the following 25-residue polypeptide: Small ribosomal subunit protein uS19 (25 aa).

The interval 1-25 is disordered; sequence GHKLGEFAPTRTFRGHKKEDKKVKR.

It belongs to the universal ribosomal protein uS19 family.

In terms of biological role, protein S19 forms a complex with S13 that binds strongly to the 16S ribosomal RNA. The sequence is that of Small ribosomal subunit protein uS19 (rpsS) from Acholeplasma laidlawii.